Consider the following 29-residue polypeptide: Glucagon (29 aa).

Phosphoserine is present on serine 2.

Belongs to the glucagon family.

The protein resides in the secreted. Its function is as follows. Glucagon plays a key role in glucose metabolism and homeostasis. Regulates blood glucose by increasing gluconeogenesis and decreasing glycolysis. This Oryctolagus cuniculus (Rabbit) protein is Glucagon (GCG).